Here is a 317-residue protein sequence, read N- to C-terminus: Melanocyte-stimulating hormone receptor (317 aa).

Residues 1–37 (MPVQGSQRRLLGSLNSTPTATPHLGLAANQTGARCLE) are Extracellular-facing. Asn29 is a glycosylation site (N-linked (GlcNAc...) asparagine). The helical transmembrane segment at 38 to 63 (VSIPDGLFLSLGLVSLVENVLVVTAI) threads the bilayer. Residues 64–72 (AKNRNLHSP) are Cytoplasmic-facing. Residues 73–93 (MYCFICCLALSDLLVSGSNML) traverse the membrane as a helical segment. The Extracellular segment spans residues 94 to 118 (ETAVILLLEAGALAARAAVVQQLDN). A helical transmembrane segment spans residues 119 to 140 (VIDVITCSSMLSSLCFLGAIAV). The Cytoplasmic segment spans residues 141 to 163 (DRYISIFYALRYHSIVTLPRARR). The helical transmembrane segment at 164–183 (AVAAIWVASVLFSMLFIAYY) threads the bilayer. The Extracellular portion of the chain corresponds to 184 to 191 (DHAAVLLC). The helical transmembrane segment at 192-211 (LVVFFLAMLVLMAVLYVHML) threads the bilayer. Topologically, residues 212-240 (ARACQHAQGIARLHKRQRPAHQSFGLKGA) are cytoplasmic. A helical membrane pass occupies residues 241–266 (ATLTILLGIFFLCWGPFFLHLTLIVL). At 267 to 279 (CPQHPTCSCIFKN) the chain is on the extracellular side. Residues 280–300 (FNLFLTLIICNAIIDPLIYAF) traverse the membrane as a helical segment. The Cytoplasmic segment spans residues 301–317 (RSQELRRTLKEVLLCSW). Residue Cys315 is the site of S-palmitoyl cysteine attachment.

It belongs to the G-protein coupled receptor 1 family. In terms of assembly, interacts with MGRN1, but does not undergo MGRN1-mediated ubiquitination; this interaction competes with GNAS-binding and thus inhibits agonist-induced cAMP production. Interacts with OPN3; the interaction results in a decrease in MC1R-mediated cAMP signaling and ultimately a decrease in melanin production in melanocytes.

It is found in the cell membrane. Receptor for MSH (alpha, beta and gamma) and ACTH. The activity of this receptor is mediated by G proteins which activate adenylate cyclase. Mediates melanogenesis, the production of eumelanin (black/brown) and phaeomelanin (red/yellow), via regulation of cAMP signaling in melanocytes. This is Melanocyte-stimulating hormone receptor (MC1R) from Erythrocebus patas (Red guenon).